Reading from the N-terminus, the 766-residue chain is Pentatricopeptide repeat-containing protein At3g61520, mitochondrial (766 aa).

A mitochondrion-targeting transit peptide spans 1 to 30; it reads MSIMLSISRRRNSYILLNHSRFLRRFSYDV. 16 PPR repeats span residues 151–181, 184–218, 221–257, 258–292, 293–327, 328–358, 369–404, 405–439, 440–474, 475–509, 510–544, 545–579, 580–614, 615–650, 651–685, and 686–720; these read TVVATNLLIRWFGRMGMVNQSVLVYERLDSN, NSQVRNVVVDVLLRNGLVDDAFKVLDEMLQKESVF, NRITADIVLHEVWKGRLLTEEKIIALISRFSSHGVSP, NSVWLTRFISSLCKNARANAAWDILSDLMKNKTPL, EAPPFNALLSCLGRNMDISRMNDLVLKMDEVKIRP, DVVTLGILINTLCKSRRVDEALEVFEKMRGK, DSIHFNTLIDGLCKVGRLKEAEELLVRMKLEERCAP, NAVTYNCLIDGYCRAGKLETAKEVVSRMKEDEIKP, NVVTVNTIVGGMCRHHGLNMAVVFFMDMEKEGVKG, NVVTYMTLIHACCSVSNVEKAMYWYEKMLEAGCSP, DAKIYYALISGLCQVRRDHDAIRVVEKLKEGGFSL, DLLAYNMLIGLFCDKNNTEKVYEMLTDMEKEGKKP, DSITYNTLISFFGKHKDFESVERMMEQMREDGLDP, TVTTYGAVIDAYCSVGELDEALKLFKDMGLHSKVNP, NTVIYNILINAFSKLGNFGQALSLKEEMKMKMVRP, and NVETYNALFKCLNEKTQGETLLKLMDEMVEQSCEP.

This sequence belongs to the PPR family. P subfamily.

The protein resides in the mitochondrion. The protein is Pentatricopeptide repeat-containing protein At3g61520, mitochondrial of Arabidopsis thaliana (Mouse-ear cress).